Reading from the N-terminus, the 342-residue chain is MIFVDACLKKPTPYTPVWMMRQAGRYLPEYMAVRERAGDFLSLCKDYKKASAVTIQPVEILGVDAAILFSDILVVPLEMGMGLRFEKGEGPVFDRPVKTAGDLAVLDVDRAVKNLSYVYDTIALTRENLARDKALIGFCGAPWTIATYMIEGGGTKTYAVCKKLLYTNPEFLHQILAKVTAALTDYVKAQIRAGVDAVQIFDSWAGALEESAYFEFGWRYILQIVDSVKTEFPDIPLIVFPKGVSGFLDKISGNFEVFGVDWSTPIGLAKEKLSPKFVLQGNMEPTRLYSKKAIDAGVDKILNTMKGAPHIFNLGHGILPDIPVENAKYFIKQVQEKSHNHK.

Substrate is bound by residues 21-25 (RQAGR), Asp-71, Tyr-148, Ser-203, and His-316.

This sequence belongs to the uroporphyrinogen decarboxylase family. As to quaternary structure, homodimer.

Its subcellular location is the cytoplasm. It carries out the reaction uroporphyrinogen III + 4 H(+) = coproporphyrinogen III + 4 CO2. The protein operates within porphyrin-containing compound metabolism; protoporphyrin-IX biosynthesis; coproporphyrinogen-III from 5-aminolevulinate: step 4/4. Catalyzes the decarboxylation of four acetate groups of uroporphyrinogen-III to yield coproporphyrinogen-III. The chain is Uroporphyrinogen decarboxylase from Campylobacter curvus (strain 525.92).